Here is a 226-residue protein sequence, read N- to C-terminus: N-acetyltransferase family 8 member 3 (226 aa).

A run of 2 helical transmembrane segments spans residues 36–56 and 58–78; these read MLLLPRTLLLLLGVPLTLFLA and GSWLLVLLSILTLFLSLWFLA. One can recognise an N-acetyltransferase domain in the interval 61 to 220; that stretch reads LLVLLSILTL…PMINLKYSLT (160 aa).

It belongs to the camello family.

It is found in the nucleus membrane. The protein localises to the cytoplasm. Its subcellular location is the perinuclear region. It carries out the reaction L-lysyl-[protein] + acetyl-CoA = N(6)-acetyl-L-lysyl-[protein] + CoA + H(+). Has histone acetyltransferase activity in vitro, with specificity for histone H4. The chain is N-acetyltransferase family 8 member 3 from Mus musculus (Mouse).